Reading from the N-terminus, the 362-residue chain is Cobalt-precorrin-5B C(1)-methyltransferase (362 aa).

Belongs to the CbiD family.

It carries out the reaction Co-precorrin-5B + S-adenosyl-L-methionine = Co-precorrin-6A + S-adenosyl-L-homocysteine. The protein operates within cofactor biosynthesis; adenosylcobalamin biosynthesis; cob(II)yrinate a,c-diamide from sirohydrochlorin (anaerobic route): step 6/10. In terms of biological role, catalyzes the methylation of C-1 in cobalt-precorrin-5B to form cobalt-precorrin-6A. In Burkholderia cenocepacia (strain ATCC BAA-245 / DSM 16553 / LMG 16656 / NCTC 13227 / J2315 / CF5610) (Burkholderia cepacia (strain J2315)), this protein is Cobalt-precorrin-5B C(1)-methyltransferase.